The primary structure comprises 634 residues: MRLSTAQLIAIAYYMLSIGATVPQVDGQGETEEALIQKRSYDYYQEPCDDYPQQQQQQEPCDYPQQQQQEEPCDYPQQQPQEPCDYPQQPQEPCDYPQQPQEPCDYPQQPQEPCDNPPQPDVPCDNPPQPDVPCDNPPQPDVPCDNPPQPDVPCDNPPQPDQPDDNPPIPNIPTDWIPNIPTDWIPDIPEKPTTPATTPNIPATTTTSESSSSSSSSSSSTTPKTSASTTPESSVPATTPNTSVPTTSSESTTPATSPESSVPVTSGSSILATTSESSSAPATTPNTSVPTTTTEAKSSSTPLTTTTEHDTTVVTVTSCSNSVCTESEVTTGVIVITSKDTIYTTYCPLTETTPVSTAPATETPTGTVSTSTEQSTTVITVTSCSESSCTESEVTTGVVVVTSEETVYTTFCPLTENTPGTDSTPEASIPPMETIPAGSEPSMPAGETSPAVPKSDVPATESAPVPEMTPAGSQPSIPAGETSPAVPKSDVSATESAPAPEMTPAGTETKPAAPKSSAPATEPSPVAPGTESAPAGPGASSSPKSSVLASETSPIAPGAETAPAGSSGAITIPESSAVVSTTEGAIPTTLESVPLMQPSANYSSVAPISTFEGAGNNMRLTFGAAIIGIAAFLI.

The first 27 residues, 1–27 (MRLSTAQLIAIAYYMLSIGATVPQVDG), serve as a signal peptide directing secretion. Disordered stretches follow at residues 40–307 (SYDY…TTTT) and 412–570 (CPLT…SGAI). The span at 42–114 (DYYQEPCDDY…DYPQQPQEPC (73 aa)) shows a compositional bias: low complexity. The stretch at 46-58 (EPCDDYPQQQQQQ) is one 1; approximate repeat. The 14 X 10 AA tandem repeats of [EVIQ]-P-[CDT]-D-[YNW]-P-[PQ]-[QI]-[QP]-[QDN] stretch occupies residues 46 to 187 (EPCDDYPQQQ…PNIPTDWIPD (142 aa)). Residues 59 to 69 (EPCDYPQQQQQ) form a 2; approximate repeat. Residues 70–81 (EEPCDYPQQQPQ) form a 3; approximate repeat. Repeat copies occupy residues 82–91 (EPCDYPQQPQ), 92–101 (EPCDYPQQPQ), 102–111 (EPCDYPQQPQ), 112–121 (EPCDNPPQPD), 122–131 (VPCDNPPQPD), 132–141 (VPCDNPPQPD), 142–151 (VPCDNPPQPD), 152–161 (VPCDNPPQPD), and 162–171 (QPDDNPPIPN). Pro residues predominate over residues 115 to 171 (DNPPQPDVPCDNPPQPDVPCDNPPQPDVPCDNPPQPDVPCDNPPQPDQPDDNPPIPN). Residues 172-179 (IPTDWIPN) form a 13; truncated repeat. 2 stretches are compositionally biased toward low complexity: residues 172–183 (IPTDWIPNIPTD) and 193–307 (TTPA…TTTT). The stretch at 180–187 (IPTDWIPD) is one 14; truncated repeat. N-linked (GlcNAc...) asparagine glycosylation is found at asparagine 241 and asparagine 286. The span at 415–426 (TENTPGTDSTPE) shows a compositional bias: polar residues. Low complexity predominate over residues 508-550 (ETKPAAPKSSAPATEPSPVAPGTESAPAGPGASSSPKSSVLAS). Residue asparagine 601 is glycosylated (N-linked (GlcNAc...) asparagine). The GPI-anchor amidated glycine moiety is linked to residue glycine 613. Residues 614–634 (AGNNMRLTFGAAIIGIAAFLI) constitute a propeptide, removed in mature form.

This sequence belongs to the HWP1 family. The GPI-anchor is attached to the protein in the endoplasmic reticulum and serves to target the protein to the cell surface. There, the glucosamine-inositol phospholipid moiety is cleaved off and the GPI-modified mannoprotein is covalently attached via its lipidless GPI glycan remnant to the 1,6-beta-glucan of the outer cell wall layer. In terms of processing, serves as a substrate for mammalian transglutaminases which are necessary for cross-linking between HWP1 and host epithelial cells. Also predicted to be a substrate for cleavage by KEX2. Post-translationally, N- and O-glycosylated.

The protein resides in the secreted. It localises to the cell wall. It is found in the membrane. In terms of biological role, major hyphal cell wall protein which plays a role of adhesin and is required for mating, normal hyphal development, cell-to-cell adhesive functions necessary for biofilm integrity, attachment to host, and virulence. Promotes interactions with host and bacterial molecules, thus leading to effective colonization within polymicrobial communities. Plays a crucial role in gastrointestinal colonization, in mucosal symptomatic and asymptomatic infections, in vaginitis, as well as in lethal oroesophageal candidiasis, caused by the combined action of fungal virulence factors and host inflammatory responses when protective immunity is absent. This chain is Hyphal wall protein 1 (HWP1), found in Candida albicans (strain SC5314 / ATCC MYA-2876) (Yeast).